The following is a 205-amino-acid chain: LexA repressor (205 aa).

A DNA-binding region (H-T-H motif) is located at residues 28–48; sequence RAEIAASLGFRSPNAAEEHLK. Catalysis depends on for autocatalytic cleavage activity residues serine 122 and lysine 159.

It belongs to the peptidase S24 family. As to quaternary structure, homodimer.

It catalyses the reaction Hydrolysis of Ala-|-Gly bond in repressor LexA.. In terms of biological role, represses a number of genes involved in the response to DNA damage (SOS response), including recA and lexA. Binds to the 16 bp palindromic sequence 5'-CTGTATATATATACAG-3'. In the presence of single-stranded DNA, RecA interacts with LexA causing an autocatalytic cleavage which disrupts the DNA-binding part of LexA, leading to derepression of the SOS regulon and eventually DNA repair. The protein is LexA repressor of Providencia rettgeri.